A 523-amino-acid chain; its full sequence is MSLTPNHRPVLVVDYGAQYAQLIARRVREAGIYSEVIPHTATPQEIQEKNPVALVLSGGPSSVYAEDAPGIDPDILKLGLPVFGICYGFQAMTHALGGKVAATGKREYGRTDLEVKGGVLHDGLELSHKVWMSHGDAVSEAPEGFTVTASSEAAPVAAFENVEAKMAGVQYHPEVLHSPHGQQVLTRFLTEIAGLEQNWTAANIAEELVEKIREQVGPEGRAICGLSGGVDSAVAAALVQRAIGDRLTCVFVDHGLLRAGEREQVEKDFVAATGAKLVTVDERKAFLDKLAGVTEPEAKRKAIGAEFIRSFERAVAGVLEDSPEGSTVDFLVQGTLYPDVVESGGGAGTANIKSHHNVGGLPDDVEFELVEPLRLLFKDEVRAVGRELGLPEVIVARQPFPGPGLGIRIIGEVTEERLETLRHADLIARTELTAAGLDGIIWQCPVVLLADVRSVGVQGDGRTYGHPIVLRPVSSEDAMTADWTRLPYEVLERISTRITNEVADVNRVVLDVTSKPPGTIEWE.

Residues Pro-9–Asn-198 form the Glutamine amidotransferase type-1 domain. Catalysis depends on Cys-86, which acts as the Nucleophile. Residues His-172 and Glu-174 contribute to the active site. The 199-residue stretch at Trp-199–Arg-397 folds into the GMPS ATP-PPase domain. Ser-227–Ala-233 serves as a coordination point for ATP.

In terms of assembly, homodimer.

It carries out the reaction XMP + L-glutamine + ATP + H2O = GMP + L-glutamate + AMP + diphosphate + 2 H(+). It participates in purine metabolism; GMP biosynthesis; GMP from XMP (L-Gln route): step 1/1. Catalyzes the synthesis of GMP from XMP. This Corynebacterium efficiens (strain DSM 44549 / YS-314 / AJ 12310 / JCM 11189 / NBRC 100395) protein is GMP synthase [glutamine-hydrolyzing].